We begin with the raw amino-acid sequence, 315 residues long: Ankyrin repeat domain-containing protein SOWAHD (315 aa).

The disordered stretch occupies residues M1 to L39. 3 ANK repeats span residues P112–L141, T147–E162, and G186–R216.

This sequence belongs to the SOWAH family.

This is Ankyrin repeat domain-containing protein SOWAHD (SOWAHD) from Homo sapiens (Human).